The chain runs to 260 residues: Hydroxyacylglutathione hydrolase (260 aa).

Residues histidine 55, histidine 57, aspartate 59, histidine 60, histidine 116, aspartate 133, and histidine 171 each coordinate Zn(2+).

It belongs to the metallo-beta-lactamase superfamily. Glyoxalase II family. Monomer. Zn(2+) is required as a cofactor.

The enzyme catalyses an S-(2-hydroxyacyl)glutathione + H2O = a 2-hydroxy carboxylate + glutathione + H(+). It functions in the pathway secondary metabolite metabolism; methylglyoxal degradation; (R)-lactate from methylglyoxal: step 2/2. Thiolesterase that catalyzes the hydrolysis of S-D-lactoyl-glutathione to form glutathione and D-lactic acid. The protein is Hydroxyacylglutathione hydrolase of Shewanella loihica (strain ATCC BAA-1088 / PV-4).